Here is a 219-residue protein sequence, read N- to C-terminus: Small ribosomal subunit protein uS5 (219 aa).

The S5 DRBM domain maps to 52-115; the sequence is LDDEVLDINM…DVAKLNLISV (64 aa). The tract at residues 196 to 219 is disordered; the sequence is LRNASQSRTPRRAAAKQREQEVSE.

It belongs to the universal ribosomal protein uS5 family. In terms of assembly, part of the 30S ribosomal subunit. Contacts protein S4.

Functionally, with S4 and S12 plays an important role in translational accuracy. In Haloquadratum walsbyi (strain DSM 16790 / HBSQ001), this protein is Small ribosomal subunit protein uS5.